An 89-amino-acid chain; its full sequence is MSVADIKKSEVVAQFARGANDTGSPEVQVALLTARITELTGHFKTHAKDHHSRRGLLRMVSRRRKLLDYLKGKDADRYRALIEKLGLRK.

Belongs to the universal ribosomal protein uS15 family. As to quaternary structure, part of the 30S ribosomal subunit. Forms a bridge to the 50S subunit in the 70S ribosome, contacting the 23S rRNA.

In terms of biological role, one of the primary rRNA binding proteins, it binds directly to 16S rRNA where it helps nucleate assembly of the platform of the 30S subunit by binding and bridging several RNA helices of the 16S rRNA. Its function is as follows. Forms an intersubunit bridge (bridge B4) with the 23S rRNA of the 50S subunit in the ribosome. The sequence is that of Small ribosomal subunit protein uS15 from Burkholderia mallei (strain NCTC 10247).